Here is an 805-residue protein sequence, read N- to C-terminus: Leucine--tRNA ligase (805 aa).

The short motif at 40 to 51 (PYPSGQGLHVGH) is the 'HIGH' region element. The 'KMSKS' region motif lies at 577–581 (KMSKS). ATP is bound at residue Lys580.

This sequence belongs to the class-I aminoacyl-tRNA synthetase family.

The protein resides in the cytoplasm. The enzyme catalyses tRNA(Leu) + L-leucine + ATP = L-leucyl-tRNA(Leu) + AMP + diphosphate. The protein is Leucine--tRNA ligase of Limosilactobacillus fermentum (strain NBRC 3956 / LMG 18251) (Lactobacillus fermentum).